The primary structure comprises 7031 residues: Extracellular matrix-binding protein EbhB (7031 aa).

The signal sequence occupies residues Met-1–Ala-39. Residues Glu-41–Gln-59 show a composition bias toward polar residues. 5 disordered regions span residues Glu-41–Glu-86, Lys-99–Asn-152, Pro-250–Val-277, Asn-1342–Asp-1373, and Thr-2418–Ala-2438. Low complexity predominate over residues Ser-65 to Ser-80. Over residues Lys-99 to Asn-117 the composition is skewed to polar residues. Over residues Pro-130 to Asn-140 the composition is skewed to basic and acidic residues. Polar residues-rich tracts occupy residues Glu-141–Asp-151, Pro-250–Ser-266, Phe-1360–Asp-1373, and His-2427–Ala-2438. FIVAR domains lie at Ala-2524–Ala-2580, Ser-2610–Glu-2666, Asp-2687–Ala-2750, Ala-2780–Glu-2836, Ala-2864–Asn-2919, Ala-2947–Asn-3002, Ala-3030–Lys-3085, Ala-3154–Lys-3212, Ala-3280–Ala-3339, Ala-3407–Ala-3465, Ala-3533–Ala-3591, Ala-3659–Lys-3717, Ala-3785–Ala-3843, Ala-3911–Ala-3969, Ala-4037–Ala-4095, Ala-4163–Ala-4221, Gln-4289–Ala-4347, Ala-4415–Ala-4473, Ala-4541–Ile-4599, Ala-4667–Ala-4725, Ala-4793–Ala-4851, Ala-4919–Met-4977, Ala-5045–Ala-5103, Ala-5171–Val-5229, Ala-5297–Ala-5355, Ala-5423–Ala-5481, Ala-5549–Ala-5607, Ala-5675–Ala-5733, Ala-5801–Ala-5859, Ala-5927–Ala-5985, Ala-6053–Lys-6111, Ala-6179–Ala-6236, Ala-6304–Ala-6362, Ala-6430–Ala-6488, Ala-6556–Ala-6614, Ala-6682–Ala-6740, Asp-6818–Ala-6866, and Ala-6934–Ala-6992.

This is Extracellular matrix-binding protein EbhB (ebhB) from Staphylococcus aureus (strain Newman).